Consider the following 559-residue polypeptide: Chaperonin GroEL 3 (559 aa).

ATP contacts are provided by residues 88-92, Gly-426, and Asp-507; that span reads DGTTT.

The protein belongs to the chaperonin (HSP60) family. Forms a cylinder of 14 subunits composed of two heptameric rings stacked back-to-back. Interacts with the co-chaperonin GroES.

The protein resides in the cytoplasm. The enzyme catalyses ATP + H2O + a folded polypeptide = ADP + phosphate + an unfolded polypeptide.. Functionally, together with its co-chaperonin GroES, plays an essential role in assisting protein folding. The GroEL-GroES system forms a nano-cage that allows encapsulation of the non-native substrate proteins and provides a physical environment optimized to promote and accelerate protein folding. The polypeptide is Chaperonin GroEL 3 (Methylococcus capsulatus (strain ATCC 33009 / NCIMB 11132 / Bath)).